The sequence spans 231 residues: Protein OPG061 (231 aa).

It belongs to the orthopoxvirus OPG058 family.

The protein resides in the host nucleus. It localises to the host nucleolus. This is Protein OPG061 (OPG061) from Cynomys gunnisoni (Gunnison's prairie dog).